Reading from the N-terminus, the 186-residue chain is Adenylate kinase (186 aa).

10–15 is a binding site for ATP; that stretch reads GSGKGT. Residues 30-55 are NMP; it reads ATGDVFRERMKTDMALRDIVSSGGYV. Residues Thr31, Arg36, 53–55, 81–84, and Gln88 contribute to the AMP site; these read GYV and GYPR. An LID region spans residues 122 to 132; it reads ARSKESGRTDD. ATP is bound at residue Arg123. Arg129 and Arg140 together coordinate AMP. Lys168 serves as a coordination point for ATP.

This sequence belongs to the adenylate kinase family. As to quaternary structure, monomer.

The protein resides in the cytoplasm. The catalysed reaction is AMP + ATP = 2 ADP. It participates in purine metabolism; AMP biosynthesis via salvage pathway; AMP from ADP: step 1/1. In terms of biological role, catalyzes the reversible transfer of the terminal phosphate group between ATP and AMP. Plays an important role in cellular energy homeostasis and in adenine nucleotide metabolism. This Tropheryma whipplei (strain TW08/27) (Whipple's bacillus) protein is Adenylate kinase.